A 212-amino-acid polypeptide reads, in one-letter code: Leucine efflux protein (212 aa).

Transmembrane regions (helical) follow at residues 12–32, 49–69, 71–91, 122–142, 153–173, and 188–208; these read TYLV…LFVL, GVFI…ATLI, TTPI…LYLG, ILSL…VQFI, FFIL…FLII, and LAKV…ARLA.

It belongs to the Rht family.

The protein localises to the cell inner membrane. It carries out the reaction L-leucine(in) + H(+)(out) = L-leucine(out) + H(+)(in). Leucine export is inhibited by the proton ionophore carbonyl cyanide m-chlorophenylhydrazone (CCCP). Functionally, exporter of leucine. Can also transport its natural analog L-alpha-amino-n-butyric acid and some other structurally unrelated amino acids. Leucine excretion is probably driven by proton motive force. The polypeptide is Leucine efflux protein (Escherichia coli (strain K12)).